The following is a 591-amino-acid chain: MSWLFGIKGPKGEGTGPPLPLPPAQPGAEGGGDRGAGDRPSPKDKWSNFDPTGLERAAKAARELEHSRHAKEALSLAQMQEQTLQLEQQSKLKEYEAAVEQLKSEQIRVQAEERRKTLTEETRQHQARAQYQDKLARQRYEDQLKQQQLLNEENLRKQEESVQKQEAIRRATVEREMELRHKNEMLRVEAEARARAKADRENADIIREQIRLKAAEHRQTILESIRTAGTLLGEGFRAFVTDWDKVTATVAGLTLLAVGVYSAKNATSVAGRYIEARLGKPSLVRETSRISVLEALRHPIQVSRRLVSRPQDALEGVILSPSLEARVRDIAIATRNTKKNKSLYRNVLMYGPPGTGKTLFAKKLALHSGMDYAIMTGGDVAPMGREGVTAMHKVFDWASTSRRGLLLFVDEADAFLRKRATEKISEDLRATLNAFLHRTGQHSSKFMLVLASNQPEQFDWAINDRIDEMVCFALPQREERERLVRMYFDKYVLKPATEGKQRLKVAQFDYGKKCSEVAQLTEGMSGREIAQLAVAWQAMAYSSEDGVLTEAMMDARVQDAVQQHQQKMQWLKVERPDSQTNKPPHPSLLSC.

The segment at 1–52 is disordered; sequence MSWLFGIKGPKGEGTGPPLPLPPAQPGAEGGGDRGAGDRPSPKDKWSNFDPT. Serine 2 carries the post-translational modification N-acetylserine. Positions 2 to 49 are required for interaction with the inner surface of the mitochondrial outer membrane; sequence SWLFGIKGPKGEGTGPPLPLPPAQPGAEGGGDRGAGDRPSPKDKWSNF. At 2 to 245 the chain is on the mitochondrial intermembrane side; the sequence is SWLFGIKGPK…FRAFVTDWDK (244 aa). Basic and acidic residues predominate over residues 31 to 47; the sequence is GGDRGAGDRPSPKDKWS. A coiled-coil region spans residues 55–216; the sequence is ERAAKAAREL…REQIRLKAAE (162 aa). The chain crosses the membrane as a helical span at residues 246-263; that stretch reads VTATVAGLTLLAVGVYSA. The Mitochondrial matrix segment spans residues 264–586; that stretch reads KNATSVAGRY…DSQTNKPPHP (323 aa). The interval 289-304 is S100B-binding; that stretch reads RISVLEALRHPIQVSR. An ATP-binding site is contributed by 351 to 358; the sequence is GPPGTGKT. The residue at position 490 (lysine 490) is an N6-acetyllysine; alternate. Position 490 is an N6-succinyllysine; alternate (lysine 490). An N6-acetyllysine mark is found at lysine 494 and lysine 512. The segment at 572–591 is disordered; sequence KVERPDSQTNKPPHPSLLSC.

Belongs to the AAA ATPase family. As to quaternary structure, can form homooligomers. Homodimer formation at the N-terminus may be regulated by ATP and is required for the interaction with the inner surface of the mitochondrial outer membrane and correct mitochondrial homeostasis. Interacts with components of the mitochondrial ribosome and with other proteins involved in mitochondrial RNA metabolism. May also interact with protein involved in lipid metabolism, including STARD9. May interact with FAM210A. Interacts with GADD45GIP1. Interacts with S100B in a Ca(+2)- and Zn(+2)-dependent manner; this interaction probably occurs in the cytosol prior to mitochondrial targeting. S100B could assist ATAD3A cytoplasmic processing, preventing aggregation and favoring mitochondrial localization. Interacts with HSP60/HSPD1. Interacts with CLPB. Interacts with EIF2AK3/PERK; ATAD3A and EIF2S1/eIF-2-alpha occupy a common binding site within the cytoplasmic loop of EIF2AK3/PERK, leading to prevent EIF2AK3/PERK association with its substrate EIF2S1/eIF-2-alpha. In terms of tissue distribution, expressed in heart, spleen, kidney, liver and at smaller levels, in lung and muscle (at protein level).

It localises to the mitochondrion inner membrane. Its subcellular location is the mitochondrion matrix. The protein resides in the mitochondrion nucleoid. The enzyme catalyses ATP + H2O = ADP + phosphate + H(+). Functionally, essential for mitochondrial network organization, mitochondrial metabolism and cell growth at organism and cellular level. May play an important role in mitochondrial protein synthesis. May also participate in mitochondrial DNA replication. May bind to mitochondrial DNA D-loops and contribute to nucleoid stability. Required for enhanced channeling of cholesterol for hormone-dependent steroidogenesis. Involved in mitochondrial-mediated antiviral innate immunity. Required to protect mitochondria from the PERK-mediated unfolded protein response: specifically inhibits the activity of EIF2AK3/PERK at mitochondria-endoplasmic reticulum contact sites, thereby providing a safe haven for mitochondrial protein translation during endoplasmic reticulum stress. Ability to inhibit EIF2AK3/PERK is independent of its ATPase activity. Also involved in the mitochondrial DNA damage response by promoting signaling between damaged genomes and the mitochondrial membrane, leading to activation of the integrated stress response (ISR). The polypeptide is ATPase family AAA domain-containing protein 3A (Atad3a) (Mus musculus (Mouse)).